We begin with the raw amino-acid sequence, 260 residues long: Carbonic anhydrase 2 (260 aa).

The residue at position 2 (S2) is an N-acetylserine. Phosphoserine is present on S2. Positions 3 to 259 (HHWGYGKHNG…LKNRQIKASF (257 aa)) constitute an Alpha-carbonic anhydrase domain. H64 (proton donor/acceptor) is an active-site residue. Residues H94, H96, and H119 each contribute to the Zn(2+) site. 2 positions are modified to phosphoserine: S165 and S172. 198–199 (TT) contacts substrate.

Belongs to the alpha-carbonic anhydrase family. Interacts with SLC4A4. Interaction with SLC4A7 regulates SLC4A7 transporter activity. Interacts with SLC26A6 isoform 4 (via C-terminus cytoplasmic domain). The cofactor is Zn(2+). Co(2+) is required as a cofactor.

The protein resides in the cytoplasm. It localises to the cell membrane. The enzyme catalyses hydrogencarbonate + H(+) = CO2 + H2O. The catalysed reaction is urea = cyanamide + H2O. Its activity is regulated as follows. Activated by X-ray, histamine, L-adrenaline, L- and D-phenylalanine, L- and D-histidine, L-His-OMe and beta-Ala-His (carnosine). Competitively inhibited by saccharin, thioxolone, coumarins, 667-coumate, celecoxib (Celebrex), valdecoxib (Bextra), SC-125, SC-560, diclofenac, acetate, azide, bromide, sulfonamide derivatives such as acetazolamide (AZA), methazolamide (MZA), ethoxzolamide (EZA), dichlorophenamide (DCP), brinzolamide, dansylamide, thiabendazole-5-sulfonamide, trifluoromethane sulfonamide and N-hydroxysulfamide, fructose-based sugar sulfamate RWJ-37497, and Foscarnet (phosphonoformate trisodium salt). Repressed strongly by hydrogen sulfide(HS) and weakly by nitrate (NO(3)). Esterase activity weakly reduced by cyanamide. N-hydroxyurea interferes with zinc binding and inhibit activity. In terms of biological role, catalyzes the reversible hydration of carbon dioxide. Can also hydrate cyanamide to urea. Stimulates the chloride-bicarbonate exchange activity of SLC26A6. Essential for bone resorption and osteoclast differentiation. Involved in the regulation of fluid secretion into the anterior chamber of the eye. Contributes to intracellular pH regulation in the duodenal upper villous epithelium during proton-coupled peptide absorption. The chain is Carbonic anhydrase 2 (CA2) from Homo sapiens (Human).